We begin with the raw amino-acid sequence, 101 residues long: Ascorbate-specific PTS system EIIB component (101 aa).

In terms of domain architecture, PTS EIIB type-2 spans 3–96 (VRILAVCGNG…KLLKVIKEHF (94 aa)). The active-site Phosphocysteine intermediate is the C9. Phosphocysteine is present on C9.

Its subcellular location is the cytoplasm. It carries out the reaction N(pros)-phospho-L-histidyl-[protein] + L-ascorbate(out) = L-ascorbate 6-phosphate(in) + L-histidyl-[protein]. Functionally, the phosphoenolpyruvate-dependent sugar phosphotransferase system (sugar PTS), a major carbohydrate active transport system, catalyzes the phosphorylation of incoming sugar substrates concomitantly with their translocation across the cell membrane. The enzyme II UlaABC PTS system is involved in ascorbate transport. The protein is Ascorbate-specific PTS system EIIB component (ulaB) of Shigella dysenteriae serotype 1 (strain Sd197).